The chain runs to 1067 residues: MGIKTLIWLSILVVGIYCEISDEDAPVHYCFVNPPPKTRLSPNLLQNITTCTHLVYGSIPIDRDTGYPQYSVSDVESGYDIDNIRTFMRLRKYHPNAKLLMGVVRTKPFEDAATSVKVANGLRSHVKSKRFDGLFVTFNGIHLEYRASTSFLETISKDKKMSLTFGVTGRRVFAFDALRRLQEINDLVEYIYLDMGELPSNEELARVTHINPLFYNGSIPFEETIQGTVEELSKEGILPSRIVVGLTAGGWKFEIKETQDPLKISHGQYAENNGKRVSYQDACRARGAVIYDWQTMNEITVYRQTWMSVNLPTIKAMGEKMKWILGQKFAGIGISHALFDDPRGDCGTDPLPAHRLVMELIRNTIPANPAKCTRLCYLDPEEVEETFPIDNLKSDYCSHIVVPYFALDLSDKMIEEDKAEDLVKKIDDWRSKIVEVAPRLILSVGSKQASTIWQFLLGNDFHRKELAEGLVKAINSTNADGLEISWTSQPMVSDFDKKNLKSFINDIVAADTAKMVEIVVATSQQSAYSDFYDYEHLNKTASLIVLHSHRLHSDSLPFTGHPSPLRATSSMTNQKMSWESLLSHWVEKRVLPSKLVLSLSASTLSMQSLADVRSSAATPFGQSAFVSMLRSKKGDIHSQQEICESLKSGTGVTHWVDGAEVPYLRRYDQMVAYENTRSAHIKAVWASMEGVGGLALHNMHQDDPSAVCDNRTAFPILNALSRAQVCQTCLKQHDFKKCEQHDFVVSCNFELKRSTPVFKTDIVPYERCTEVVVEQATLTLGGNVNFNDVQQEQVVKNLTSLRSKMVKCGMVLSLSCGDSEKYLNSILGDNMTFAIGNVMNIMEKYKFSGVQLDCEKVIRRGNHIYFNTFVKKLAQKFESGKASNGCNRTLSARFSHYTQKPSTYYSVSLLNRLSHIALRMTDKHSVDLPFFFNHTKPEFPSTEKFVNIWKNVGLKPDKLVLELSPFGWQTGKKVGEKKKMTQGVNCVTAGNRAVYEHDYETLTGMTKHENGTINMPMIEDFRYKIGYIQREQLGGIALNVNGDDYTGICGRGSFPILKSVYSSHKCR.

An N-terminal signal peptide occupies residues 1 to 18 (MGIKTLIWLSILVVGIYC). 3 GH18 domains span residues 26–364 (PVHY…IRNT), 372–727 (CTRL…QVCQ), and 743–1067 (FVVS…HKCR). Residues Cys30 and Cys51 are joined by a disulfide bond. Residues Asn47 and Asn216 are each glycosylated (N-linked (GlcNAc...) asparagine). A disulfide bond links Cys376 and Cys397. N-linked (GlcNAc...) asparagine glycosylation is found at Asn475, Asn538, and Asn710. Cys747 and Cys768 are oxidised to a cystine. N-linked (GlcNAc...) asparagine glycans are attached at residues Asn797 and Asn830. Glu855 functions as the Proton donor in the catalytic mechanism. N-linked (GlcNAc...) asparagine glycosylation is found at Asn887, Asn933, and Asn1010.

It belongs to the glycosyl hydrolase 18 family.

The protein localises to the secreted. In terms of biological role, putative chitinase. The protein is Chitinase-like protein C25A8.4 (cht-3) of Caenorhabditis elegans.